A 418-amino-acid chain; its full sequence is Protease LasA (418 aa).

The first 31 residues, 1–31 (MQHKRSRAMASPRSPFLFVLLALAVGGTANA), serve as a signal peptide directing secretion. Positions 32–236 (HDDGLPAFRY…ARQLQAKAAL (205 aa)) are excised as a propeptide. Positions 259 and 272 each coordinate Zn(2+). A disulfide bridge connects residues Cys-301 and Cys-347. Catalysis depends on proton donor/acceptor residues His-317 and His-356. His-358 contacts Zn(2+). A disulfide bridge connects residues Cys-391 and Cys-406.

Belongs to the peptidase M23A family. The cofactor is Zn(2+). Processing of pro-LasA can occur extracellularly and requires elastase (lasB). Secretion and processing may be linked.

It localises to the secreted. Its function is as follows. Involved in proteolysis and elastolysis (degradation of the host protein elastin). Has staphylolytic activity (degrades pentaglycine cross-links in cell wall peptidoglycan), preferring Gly-Gly-|-X substrates where X is Ala or Gly. Enhances the elastolytic but not proteolytic activity of elastase (lasB) and elastolytic activity of other proteases. Degradation of host elastin is likely to contribute to the pathogenicity of P.aeruginosa. While either His-317 or His-356 can abstract a proton in the hydrolysis reaction, the same residue performs both functions in a given catalytic cycle, with the other stabilizing the catalytic intermediate. This is Protease LasA (lasA) from Pseudomonas aeruginosa (strain ATCC 15692 / DSM 22644 / CIP 104116 / JCM 14847 / LMG 12228 / 1C / PRS 101 / PAO1).